A 433-amino-acid polypeptide reads, in one-letter code: G2/mitotic-specific cyclin-B1 (433 aa).

The disordered stretch occupies residues 19–47 (INMAGAKRVPTAPAATSKPGLRPRTALGD). An N6-acetyllysine modification is found at lysine 73. Positions 93 to 116 (PVSEPVPEPEPEPEPEPVKEEKLS) are disordered. Serine 126 carries the phosphoserine; by CDK1 modification. Serine 128 is subject to Phosphoserine. Position 133 is a phosphoserine; by PLK1 (serine 133). The residue at position 147 (serine 147) is a Phosphoserine. Interaction with CDK2 regions lie at residues 169 to 177 (EYVKDIYAY) and 258 to 261 (YEEM). At threonine 321 the chain carries Phosphothreonine.

The protein belongs to the cyclin family. Cyclin AB subfamily. As to quaternary structure, interacts with the CDC2 protein kinase to form a serine/threonine kinase holoenzyme complex also known as maturation promoting factor (MPF). The cyclin subunit imparts substrate specificity to the complex. Binds HEI10. Interacts with catalytically active RALBP1 and CDC2 during mitosis to form an endocytotic complex during interphase. Interacts with CCNF; interaction is required for nuclear localization. Interacts with CDK5RAP3. Interacts with RFPL4A and UBE2A. Interacts with INCA1. In terms of processing, ubiquitinated by the SCF(NIPA) complex during interphase, leading to its destruction. Deubiquitinated by USP22 during G2/M phase. Post-translationally, phosphorylated by PLK1 at Ser-133 on centrosomes during prophase: phosphorylation by PLK1 does not cause nuclear import. Phosphorylation at Ser-147 was also reported to be mediated by PLK1 but Ser-133 seems to be the primary phosphorylation site.

The protein localises to the cytoplasm. Its subcellular location is the nucleus. It localises to the cytoskeleton. The protein resides in the microtubule organizing center. It is found in the centrosome. Essential for the control of the cell cycle at the G2/M (mitosis) transition. The polypeptide is G2/mitotic-specific cyclin-B1 (CCNB1) (Homo sapiens (Human)).